A 589-amino-acid polypeptide reads, in one-letter code: Serine/threonine-protein phosphatase 2A 65 kDa regulatory subunit A alpha isoform (589 aa).

At A2 the chain carries N-acetylalanine. HEAT repeat units follow at residues 8-46 (DSLYPIAVLIDELRNEDVQLRLNSIKKLSTIALALGVER), 47-84 (TRSELLPFLTDTIYDEDEVLLALAEQLGTFTTLVGGPE), 85-123 (YVHCLLPPLESLATVEETVVRDKAVESLRAISHEHSPSD), 124-161 (LEAHFVPLVKRLAGGDWFTSRTSACGLFSVCYPRVSSA), 162-200 (VKAELRQYFRNLCSDDTPMVRRAAASKLGEFAKVLELDN), 201-239 (VKSEIIPMFSNLASDEQDSVRLLAVEACVNIAQLLPQED), 240-278 (LEALVMPTLRQAAEDKSWRVRYMVADKFTELQKAVGPEI), 279-321 (TKTD…RENV), 322-360 (IMTQILPCIKELVSDANQHVKSALASVIMGLSPILGKDN), 361-399 (TIEHLLPLFLAQLKDECPEVRLNIISNLDCVNEVIGIRQ), 400-438 (LSQSLLPAIVELAEDAKWRVRLAIIEYMPLLAGQLGVEF), 439-477 (FDEKLNSLCMAWLVDHVYAIREAATSNLKKLVEKFGKEW), 478-516 (AHATIIPKVLAMSGDPNYLHRMTTLFCINVLSEVCGQDI), 517-555 (TTKHMLPTVLRMAGDPVANVRFNVAKSLQKIGPILDNST), and 556-589 (LQSEVKPILEKLTQDQDVDVKYFAQEALTVLSLA). The residue at position 280 (K280) is an N6-acetyllysine.

It belongs to the phosphatase 2A regulatory subunit A family. In terms of assembly, PP2A consists of a common heterodimeric core enzyme, composed of PPP2CA a 36 kDa catalytic subunit (subunit C) and PPP2R1A a 65 kDa constant regulatory subunit (PR65 or subunit A), that associates with a variety of regulatory subunits. Proteins that associate with the core dimer include three families of regulatory subunits B (the R2/B/PR55/B55, R3/B''/PR72/PR130/PR59 and R5/B'/B56 families), the 48 kDa variable regulatory subunit, viral proteins, and cell signaling molecules. Found in a complex with at least ARL2, PPP2CB, PPP2R1A, PPP2R2A, PPP2R5E and TBCD. Interacts with the PP2A C catalytic subunit PPP2CA. Interacts with the PP2A B subunit PPP2R2A. Interacts with the PP2A B subunit PPP2R5D. Interacts with FOXO1; the interaction dephosphorylates FOXO1 on AKT-mediated phosphorylation sites. Interacts with IPO9. Interacts with TP53 and SGO1. Interacts with PLA2G16; this interaction might decrease PP2A activity. Interacts with CTTNBP2NL. Interacts with GNA12; the interaction promotes protein phosphatase 2A activation causing dephosphorylation of MAPT. Interacts with CIP2A; this interaction stabilizes CIP2A. Interacts with PABIR1/FAM122A. Interacts with ADCY8; antagonizes interaction between ADCY8 and calmodulin. Interacts with CRTC3 (when phosphorylated at 'Ser-391'). Interacts with SPRY2. Part of the core of STRIPAK complexes composed of PP2A catalytic and scaffolding subunits, the striatins (PP2A regulatory subunits), the striatin-associated proteins MOB4, STRIP1 and STRIP2, PDCD10 and members of the STE20 kinases, such as STK24 and STK26. Component of the Integrator-PP2A (INTAC) complex, composed of the Integrator core complex and protein phosphatase 2A subunits PPP2CA and PPP2R1A.

It localises to the cytoplasm. It is found in the nucleus. The protein resides in the chromosome. The protein localises to the centromere. Its subcellular location is the lateral cell membrane. It localises to the cell projection. It is found in the dendrite. Its function is as follows. The PR65 subunit of protein phosphatase 2A serves as a scaffolding molecule to coordinate the assembly of the catalytic subunit and a variable regulatory B subunit. Upon interaction with GNA12 promotes dephosphorylation of microtubule associated protein TAU/MAPT. Required for proper chromosome segregation and for centromeric localization of SGO1 in mitosis. Together with RACK1 adapter, mediates dephosphorylation of AKT1 at 'Ser-473', preventing AKT1 activation and AKT-mTOR signaling pathway. Dephosphorylation of AKT1 is essential for regulatory T-cells (Treg) homeostasis and stability. Part of the striatin-interacting phosphatase and kinase (STRIPAK) complexes. STRIPAK complexes have critical roles in protein (de)phosphorylation and are regulators of multiple signaling pathways including Hippo, MAPK, nuclear receptor and cytoskeleton remodeling. Different types of STRIPAK complexes are involved in a variety of biological processes such as cell growth, differentiation, apoptosis, metabolism and immune regulation. Key mediator of a quality checkpoint during transcription elongation as part of the Integrator-PP2A (INTAC) complex. The INTAC complex drives premature transcription termination of transcripts that are unfavorably configured for transcriptional elongation: within the INTAC complex, acts as a scaffolding subunit for PPP2CA, which catalyzes dephosphorylation of the C-terminal domain (CTD) of Pol II subunit POLR2A/RPB1 and SUPT5H/SPT5, thereby preventing transcriptional elongation. Regulates the recruitment of the SKA complex to kinetochores. The chain is Serine/threonine-protein phosphatase 2A 65 kDa regulatory subunit A alpha isoform (Ppp2r1a) from Mus musculus (Mouse).